Here is a 938-residue protein sequence, read N- to C-terminus: Kinesin-like protein KIN-7B (938 aa).

The 320-residue stretch at 29 to 348 folds into the Kinesin motor domain; the sequence is KILVTVRMRP…LSFAMSAKEV (320 aa). Residue 113–120 coordinates ATP; sequence GQTSSGKT. Positions 357–431 form a coiled coil; that stretch reads VVSEKKLLKH…DLERKAKERK (75 aa). The disordered stretch occupies residues 450 to 481; the sequence is TKEESIPSKSVPSSRRTARDRRKDNVRQSLTS. Residues 555–590 are a coiled coil; the sequence is KANLKEEINRLNSQEIAALEKKLECVQNTIDMLVSS. The tract at residues 628–678 is disordered; the sequence is CSPLSGTENKDPESNVVSANSAPVSFGATPPKRDDNRCRTQSREGTPVSRQ. The span at 641-652 shows a compositional bias: low complexity; the sequence is SNVVSANSAPVS. A compositionally biased stretch (basic and acidic residues) spans 658-669; it reads PKRDDNRCRTQS.

This sequence belongs to the TRAFAC class myosin-kinesin ATPase superfamily. Kinesin family. KIN-7 subfamily. In terms of assembly, interacts with ANP3. Interacts with TIO/FU. Expressed in roots, stems, flowers, pollen mother cells and embryos.

The protein resides in the cytoplasm. It localises to the cytoskeleton. Its subcellular location is the phragmoplast. Its function is as follows. Probable plus end-directed motor protein that functions in the NACK-PQR (ANP3-MKK6-MPK4) MAP kinase signaling pathway, which is essential for somatic cell cytokinesis, especially for the cell-plate formation and its expansion. May regulate the activity and the localization of ANP3, probably by association through the non-catalytic region of the kinase. Functionally redundant with NACK1 and essential to promote the progression of cytokinesis and for cellularization (formation of the cell plate) during microgametogenesis and megagametogenesis. The chain is Kinesin-like protein KIN-7B from Arabidopsis thaliana (Mouse-ear cress).